A 247-amino-acid chain; its full sequence is Ubiquinone biosynthesis O-methyltransferase (247 aa).

Positions 39, 70, 91, and 134 each coordinate S-adenosyl-L-methionine.

Belongs to the methyltransferase superfamily. UbiG/COQ3 family.

It carries out the reaction a 3-demethylubiquinol + S-adenosyl-L-methionine = a ubiquinol + S-adenosyl-L-homocysteine + H(+). The enzyme catalyses a 3-(all-trans-polyprenyl)benzene-1,2-diol + S-adenosyl-L-methionine = a 2-methoxy-6-(all-trans-polyprenyl)phenol + S-adenosyl-L-homocysteine + H(+). It functions in the pathway cofactor biosynthesis; ubiquinone biosynthesis. In terms of biological role, O-methyltransferase that catalyzes the 2 O-methylation steps in the ubiquinone biosynthetic pathway. In Cereibacter sphaeroides (strain ATCC 17023 / DSM 158 / JCM 6121 / CCUG 31486 / LMG 2827 / NBRC 12203 / NCIMB 8253 / ATH 2.4.1.) (Rhodobacter sphaeroides), this protein is Ubiquinone biosynthesis O-methyltransferase.